A 492-amino-acid polypeptide reads, in one-letter code: Probable cysteine protease ATG4 (492 aa).

Cysteine 151 functions as the Nucleophile in the catalytic mechanism. Active-site residues include aspartate 330 and histidine 332. The disordered stretch occupies residues 454–492 (FDSEIDQNNKDDNFDDDEPVNVSQTSIGEEYTSTAGSRP). Positions 474–492 (NVSQTSIGEEYTSTAGSRP) are enriched in polar residues.

The protein belongs to the peptidase C54 family.

It is found in the cytoplasm. The protein resides in the nucleus. Its subcellular location is the preautophagosomal structure. The enzyme catalyses [protein]-C-terminal L-amino acid-glycyl-phosphatidylethanolamide + H2O = [protein]-C-terminal L-amino acid-glycine + a 1,2-diacyl-sn-glycero-3-phosphoethanolamine. Cysteine protease that plays a key role in cytoplasm to vacuole transport (Cvt) and autophagy by mediating both proteolytic activation and delipidation of ATG8. Required for selective autophagic degradation of the nucleus (nucleophagy) as well as for mitophagy which contributes to regulate mitochondrial quantity and quality by eliminating the mitochondria to a basal level to fulfill cellular energy requirements and preventing excess ROS production. The protease activity is required for proteolytic activation of ATG8: cleaves the C-terminal amino acid of ATG8 to reveal a C-terminal glycine. ATG8 ubiquitin-like activity requires the exposure of the glycine at the C-terminus for its conjugation to phosphatidylethanolamine (PE) and its insertion to membranes, which is necessary for autophagy. The ATG8-PE conjugate mediates tethering between adjacent membranes and stimulates membrane hemifusion, leading to expansion of the autophagosomal membrane during autophagy. In addition to the protease activity, also catalyzes deconjugation of PE-conjugated forms of ATG8 during macroautophagy: ATG8 delipidation is required to release the protein from membranes, which facilitates multiple events during macroautophagy, and especially for efficient autophagosome biogenesis, the assembly of ATG9-containing tubulovesicular clusters into phagophores/autophagosomes, and for the disassembly of PAS-associated ATG components. ATG8 delipidation by ATG4 also recycles ATG8-PE generated on inappropriate membranes to maintain a reservoir of unlipidated ATG8 that is required for autophagosome formation at the PAS. The protein is Probable cysteine protease ATG4 (ATG4) of Debaryomyces hansenii (strain ATCC 36239 / CBS 767 / BCRC 21394 / JCM 1990 / NBRC 0083 / IGC 2968) (Yeast).